The following is a 162-amino-acid chain: Endoribonuclease YbeY (162 aa).

Residues His-128, His-132, and His-138 each contribute to the Zn(2+) site.

This sequence belongs to the endoribonuclease YbeY family. Requires Zn(2+) as cofactor.

It localises to the cytoplasm. Single strand-specific metallo-endoribonuclease involved in late-stage 70S ribosome quality control and in maturation of the 3' terminus of the 16S rRNA. This Lactococcus lactis subsp. cremoris (strain MG1363) protein is Endoribonuclease YbeY.